Reading from the N-terminus, the 506-residue chain is Glutamate--tRNA ligase (506 aa).

Residues 23–33 carry the 'HIGH' region motif; it reads PSPTGTPHVGL. A 'KMSKS' region motif is present at residues 267–271; the sequence is KLSKR. K270 contacts ATP.

It belongs to the class-I aminoacyl-tRNA synthetase family. Glutamate--tRNA ligase type 1 subfamily. As to quaternary structure, monomer.

Its subcellular location is the cytoplasm. The enzyme catalyses tRNA(Glu) + L-glutamate + ATP = L-glutamyl-tRNA(Glu) + AMP + diphosphate. Functionally, catalyzes the attachment of glutamate to tRNA(Glu) in a two-step reaction: glutamate is first activated by ATP to form Glu-AMP and then transferred to the acceptor end of tRNA(Glu). The polypeptide is Glutamate--tRNA ligase (Clavibacter michiganensis subsp. michiganensis (strain NCPPB 382)).